Reading from the N-terminus, the 435-residue chain is MHYCVLSAFLLLHLVTVALSLSTCSTLDMDQFMRKRIEAIRGQILSKLKLTSPPEDYPEPEEVPPEVISIYNSTRDLLQEKASRRAAACERERSDEEYYAKEVYKIDMPPFFPSENAIPPTFYRPYFRIVRFDVSAMEKNASNLVKAEFRVFRLQNPKARVAEQRIELYQILKSKDLTSPTQRYIDSKVVKTRAEGEWLSFDVTDAVHEWLHHKDRNLGFKISLHCPCCTFVPSNNYIIPNKSEELEARFAGIDGTSTYTSGDQKTIKSTRKKNSGKTPHLLLMLLPSYGLESQQSNRRKKRALDAAYCFRNVQDNCCLRPLYIDFKRDLGWKWIHEPKGYNANFCAGACPYLWSSDTQHSRVLSLYNTINPEASASPCCVSQDLEPLTILYYIGKTPKIEQLSNMIVKSCKCSKTKLAAFARLYHSHSNLGSET.

Residues 1-20 (MHYCVLSAFLLLHLVTVALS) form the signal peptide. Asn-72, Asn-140, and Asn-241 each carry an N-linked (GlcNAc...) asparagine glycan. Cystine bridges form between Cys-309/Cys-318, Cys-317/Cys-380, Cys-346/Cys-411, and Cys-350/Cys-413.

Belongs to the TGF-beta family. In terms of assembly, interacts with the serine proteases, HTRA1 and HTRA3. Interacts with ASPN. Interacts with MFAP5. Interacts with Transforming growth factor beta-2 (TGF-beta-2) chain; interaction is non-covalent and maintains (TGF-beta-2) in a latent state. Interacts with LRRC32/GARP; leading to regulate activation of TGF-beta-2. Interacts with NREP; the interaction results in a decrease in TGFB2 autoinduction. As to quaternary structure, transforming growth factor beta-2: Homodimer; disulfide-linked. Transforming growth factor beta-2: Interacts with TGF-beta receptors (TGFBR1 and TGFBR2), leading to signal transduction. In terms of processing, the precursor proprotein is cleaved in the Golgi apparatus to form Transforming growth factor beta-2 (TGF-beta-2) and Latency-associated peptide (LAP) chains, which remain non-covalently linked, rendering TGF-beta-2 inactive.

It localises to the secreted. The protein localises to the extracellular space. It is found in the extracellular matrix. Its function is as follows. Precursor of the Latency-associated peptide (LAP) and Transforming growth factor beta-2 (TGF-beta-2) chains, which constitute the regulatory and active subunit of TGF-beta-2, respectively. In terms of biological role, required to maintain the Transforming growth factor beta-2 (TGF-beta-2) chain in a latent state during storage in extracellular matrix. Associates non-covalently with TGF-beta-2 and regulates its activation via interaction with 'milieu molecules', such as LTBP1 and LRRC32/GARP, that control activation of TGF-beta-2. Multifunctional protein that regulates various processes such as angiogenesis and heart development. Activation into mature form follows different steps: following cleavage of the proprotein in the Golgi apparatus, Latency-associated peptide (LAP) and Transforming growth factor beta-2 (TGF-beta-2) chains remain non-covalently linked rendering TGF-beta-2 inactive during storage in extracellular matrix. At the same time, LAP chain interacts with 'milieu molecules', such as LTBP1 and LRRC32/GARP, that control activation of TGF-beta-2 and maintain it in a latent state during storage in extracellular milieus. Once activated following release of LAP, TGF-beta-2 acts by binding to TGF-beta receptors (TGFBR1 and TGFBR2), which transduce signal. In Sus scrofa (Pig), this protein is Transforming growth factor beta-2 proprotein (TGFB2).